Here is a 1077-residue protein sequence, read N- to C-terminus: Response regulator SSK1 (1077 aa).

Residues 854–1000 (NVLIVEDNII…FLERKVMEWG (147 aa)) enclose the Response regulatory domain. Aspartate 903 carries the 4-aspartylphosphate modification.

This sequence belongs to the SSK1 family.

It is found in the cytoplasm. Its function is as follows. Two-domain response regulator protein in the two-component signal transduction system of the HOG1 pathway. Involved in multi-stress responses and is essential for conidiation, secondary metabolism, autophagy and endocyrosis. In addition, regulates mycelial growth, cell nucleus development, septum formation, and organelle development. Also regulates trap formation and thus plays a crucial role in pathogenicity. This Arthrobotrys oligospora (strain ATCC 24927 / CBS 115.81 / DSM 1491) (Nematode-trapping fungus) protein is Response regulator SSK1.